The chain runs to 252 residues: Adenosylcobinamide-GDP ribazoletransferase (252 aa).

7 helical membrane-spanning segments follow: residues 35–55 (AMLP…FYIL), 58–78 (IFPA…LIGG), 113–133 (FAVL…SFII), 139–159 (YAII…FLIG), 170–190 (LFIE…MIVP), 192–212 (VLLI…IITL), and 231–251 (GANN…LLYI).

It belongs to the CobS family. Mg(2+) is required as a cofactor.

It localises to the cell membrane. The enzyme catalyses alpha-ribazole + adenosylcob(III)inamide-GDP = adenosylcob(III)alamin + GMP + H(+). It carries out the reaction alpha-ribazole 5'-phosphate + adenosylcob(III)inamide-GDP = adenosylcob(III)alamin 5'-phosphate + GMP + H(+). The protein operates within cofactor biosynthesis; adenosylcobalamin biosynthesis; adenosylcobalamin from cob(II)yrinate a,c-diamide: step 7/7. In terms of biological role, joins adenosylcobinamide-GDP and alpha-ribazole to generate adenosylcobalamin (Ado-cobalamin). Also synthesizes adenosylcobalamin 5'-phosphate from adenosylcobinamide-GDP and alpha-ribazole 5'-phosphate. This Clostridium tetani (strain Massachusetts / E88) protein is Adenosylcobinamide-GDP ribazoletransferase.